The following is a 90-amino-acid chain: Probable Fe(2+)-trafficking protein (90 aa).

This sequence belongs to the Fe(2+)-trafficking protein family.

Functionally, could be a mediator in iron transactions between iron acquisition and iron-requiring processes, such as synthesis and/or repair of Fe-S clusters in biosynthetic enzymes. The sequence is that of Probable Fe(2+)-trafficking protein from Cupriavidus pinatubonensis (strain JMP 134 / LMG 1197) (Cupriavidus necator (strain JMP 134)).